A 190-amino-acid chain; its full sequence is CASP-like protein 2U1 (190 aa).

Residues 1-16 (MAFTSLLGSDAERKVA) lie on the Cytoplasmic side of the membrane. The helical transmembrane segment at 17-37 (VAEVALRAVLCGLGALAAALV) threads the bilayer. The Extracellular portion of the chain corresponds to 38-59 (ATDTQTRTFFSLQKKATYTDMK). The chain crosses the membrane as a helical span at residues 60–80 (AMVLLVAAAAAAAGYSLLQAA). Residues 81–100 (RCCCCVALLRTSIRPRARLL) are Cytoplasmic-facing. Residues 101-121 (LAWCVFACDQALAYALLAAVV) traverse the membrane as a helical segment. Residues 122-152 (AALQASVVAKQGLPQLQWMAICALYGAFCRQ) lie on the Extracellular side of the membrane. Residues 153–173 (AGAGVACAVAAAVDAALLAFL) form a helical membrane-spanning segment. Residues 174-190 (SAFNLFRLYGAKATTTT) are Cytoplasmic-facing.

The protein belongs to the Casparian strip membrane proteins (CASP) family. As to quaternary structure, homodimer and heterodimers.

It localises to the cell membrane. The sequence is that of CASP-like protein 2U1 from Zea mays (Maize).